The following is a 348-amino-acid chain: Holliday junction branch migration complex subunit RuvB (348 aa).

Positions 4-184 (ADRLIAASGR…FGIVQRLEFY (181 aa)) are large ATPase domain (RuvB-L). ATP is bound by residues I23, R24, G65, K68, T69, T70, 131-133 (EDF), R174, Y184, and R221. Residue T69 coordinates Mg(2+). Positions 185–255 (NDKDLSTIVS…VADMALNLLD (71 aa)) are small ATPAse domain (RuvB-S). The tract at residues 258 to 348 (ERGFDHSDRR…GGDFSEPGDE (91 aa)) is head domain (RuvB-H). The DNA site is built by R294, R313, and R318.

This sequence belongs to the RuvB family. Homohexamer. Forms an RuvA(8)-RuvB(12)-Holliday junction (HJ) complex. HJ DNA is sandwiched between 2 RuvA tetramers; dsDNA enters through RuvA and exits via RuvB. An RuvB hexamer assembles on each DNA strand where it exits the tetramer. Each RuvB hexamer is contacted by two RuvA subunits (via domain III) on 2 adjacent RuvB subunits; this complex drives branch migration. In the full resolvosome a probable DNA-RuvA(4)-RuvB(12)-RuvC(2) complex forms which resolves the HJ.

Its subcellular location is the cytoplasm. It catalyses the reaction ATP + H2O = ADP + phosphate + H(+). In terms of biological role, the RuvA-RuvB-RuvC complex processes Holliday junction (HJ) DNA during genetic recombination and DNA repair, while the RuvA-RuvB complex plays an important role in the rescue of blocked DNA replication forks via replication fork reversal (RFR). RuvA specifically binds to HJ cruciform DNA, conferring on it an open structure. The RuvB hexamer acts as an ATP-dependent pump, pulling dsDNA into and through the RuvAB complex. RuvB forms 2 homohexamers on either side of HJ DNA bound by 1 or 2 RuvA tetramers; 4 subunits per hexamer contact DNA at a time. Coordinated motions by a converter formed by DNA-disengaged RuvB subunits stimulates ATP hydrolysis and nucleotide exchange. Immobilization of the converter enables RuvB to convert the ATP-contained energy into a lever motion, pulling 2 nucleotides of DNA out of the RuvA tetramer per ATP hydrolyzed, thus driving DNA branch migration. The RuvB motors rotate together with the DNA substrate, which together with the progressing nucleotide cycle form the mechanistic basis for DNA recombination by continuous HJ branch migration. Branch migration allows RuvC to scan DNA until it finds its consensus sequence, where it cleaves and resolves cruciform DNA. This is Holliday junction branch migration complex subunit RuvB from Pseudomonas putida (strain ATCC 47054 / DSM 6125 / CFBP 8728 / NCIMB 11950 / KT2440).